The sequence spans 735 residues: Ion-translocating oxidoreductase complex subunit C (735 aa).

2 consecutive 4Fe-4S ferredoxin-type domains span residues 368 to 397 (MGAPQEEKSCIRCSACADACPADLLPQQLY) and 407 to 436 (KATAHHIADCIECGACAWVCPSNIPLVQYF). Residues C377, C380, C383, C387, C416, C419, C422, and C426 each coordinate [4Fe-4S] cluster. A disordered region spans residues 534–711 (QARAKQAAHP…EPVEPADPRK (178 aa)).

It belongs to the 4Fe4S bacterial-type ferredoxin family. RnfC subfamily. As to quaternary structure, the complex is composed of six subunits: RsxA, RsxB, RsxC, RsxD, RsxE and RsxG. Requires [4Fe-4S] cluster as cofactor.

The protein resides in the cell inner membrane. Functionally, part of a membrane-bound complex that couples electron transfer with translocation of ions across the membrane. Required to maintain the reduced state of SoxR. In Salmonella paratyphi A (strain ATCC 9150 / SARB42), this protein is Ion-translocating oxidoreductase complex subunit C.